A 441-amino-acid chain; its full sequence is Heat shock factor protein 4 (441 aa).

A DNA-binding region spans residues 17–121 (NVPAFLTKLW…EHLLEHIKRK (105 aa)). The hydrophobic repeat HR-A/B stretch occupies residues 130-205 (TKVRQEDLSK…QMQSNSPSTV (76 aa)).

This sequence belongs to the HSF family. In terms of tissue distribution, predominantly expressed in the eye.

It is found in the nucleus. Heat-shock transcription factor that specifically binds heat shock promoter elements (HSE). Required for denucleation and organelle rupture and degradation that occur during eye lens terminal differentiation, when fiber cells that compose the lens degrade all membrane-bound organelles in order to provide lens with transparency to allow the passage of light. In this process, may regulate denucleation of lens fiber cells in part by activating dnase1l1l and dnase2b transcription. May be involved in DNA repair through the transcriptional regulation of rad51. May up-regulate TP53 protein in lens fiber cells, possibly through protein stabilization. In the eye lens, controls the expression of alpha-crystallin B chain/CRYAB and consequently may be involved in the regulation of lysosomal acidification. The protein is Heat shock factor protein 4 of Danio rerio (Zebrafish).